A 371-amino-acid chain; its full sequence is Conglutinin (371 aa).

Positions 1–20 (MLLLPLSVLLLLTQPWRSLG) are cleaved as a signal peptide. The region spanning 46–216 (GLPGHDGQDG…TGAKGESGLA (171 aa)) is the Collagen-like domain. The interval 47–215 (LPGHDGQDGR…ETGAKGESGL (169 aa)) is disordered. A compositionally biased stretch (basic and acidic residues) spans 51–65 (DGQDGRECPHGEKGD). The residue at position 63 (Lys-63) is a 5-hydroxylysine. The span at 71 to 83 (PAGRAGRPGWVGP) shows a compositional bias: low complexity. Pro-78 is subject to 4-hydroxyproline. Lys-87 is modified (5-hydroxylysine). Pro-96 carries the 4-hydroxyproline modification. Lys-99 bears the 5-hydroxylysine mark. Pro-108, Pro-111, Pro-129, and Pro-132 each carry 4-hydroxyproline. A 5-hydroxylysine mark is found at Lys-135 and Lys-141. Positions 139 to 148 (GPKGGVGAPG) are enriched in gly residues. Pro-147 and Pro-153 each carry 4-hydroxyproline. 2 positions are modified to 5-hydroxylysine: Lys-159 and Lys-162. 4-hydroxyproline is present on residues Pro-171 and Pro-195. At Lys-198 the chain carries 5-hydroxylysine. The short motif at 201–203 (RGD) is the Cell attachment site element. The 99-residue stretch at 273–371 (QLCREAKGQL…SKQLLVICEF (99 aa)) folds into the C-type lectin domain. 2 disulfide bridges follow: Cys-275–Cys-369 and Cys-347–Cys-361. Residue Asn-337 is glycosylated (N-linked (GlcNAc...) asparagine).

This sequence belongs to the SFTPD family. In terms of assembly, oligomeric complex of 4 set of homotrimers. The hydroxylysines may be O-glycosylated.

Functionally, calcium-dependent lectin-like protein which binds to a yeast cell wall extract and immune complexes through the complement component (C3bi). It is capable of binding non-reducing terminal N-acetylglucosamine, mannose, and fucose residues. The polypeptide is Conglutinin (CGN1) (Bos taurus (Bovine)).